The following is a 370-amino-acid chain: G-protein coupled receptor homolog K2 (370 aa).

Residues 1-61 (MTSPTNSTML…CTFLEDTKYH (61 aa)) lie on the Extracellular side of the membrane. N-linked (GlcNAc...) asparagine; by host glycans are attached at residues Asn6 and Asn51. A helical transmembrane segment spans residues 62 to 82 (IIVIHIILFLLGSIGNIFVVS). At 83-94 (LIAFKRNKSITD) the chain is on the cytoplasmic side. Residues 95-115 (IYILNLSMSDCIFVFQIPFIV) traverse the membrane as a helical segment. Residues 116 to 131 (YSKLDQWIFGNILCKI) lie on the Extracellular side of the membrane. Residues 132-152 (MSVLYYVGFFSNMFIITLMSI) traverse the membrane as a helical segment. Over 153-171 (DRYFAIVHPIKRQPYRTKR) the chain is Cytoplasmic. Residues 172-192 (IGILMCCSAWLLSLILSSPVS) traverse the membrane as a helical segment. Residues 193-223 (KLYENIPHMSKDIYQCTLTNENDSIIAFIKR) lie on the Extracellular side of the membrane. A helical transmembrane segment spans residues 224 to 244 (LMQIEITILGFLIPIIIFVYC). Residues 245 to 265 (YYRIFTTVVRLRNRRKYKSIK) are Cytoplasmic-facing. A helical membrane pass occupies residues 266–286 (IVLMIVVCSLICWIPLYIVLM). Over 287-300 (IATIVSLYTSNIFR) the chain is Extracellular. A helical transmembrane segment spans residues 301–321 (HLCLYLNLAYAITFSETISLA). Topologically, residues 322 to 370 (RCCINPIIYTLIGEHVRSRISSICSCIYRDNRIRKKLFSRKSSSSSNII) are cytoplasmic.

This sequence belongs to the G-protein coupled receptor 1 family.

The protein resides in the host cell membrane. In terms of biological role, putative chemokine receptor. The sequence is that of G-protein coupled receptor homolog K2 from Sus scrofa (Pig).